The following is a 219-amino-acid chain: Ribonuclease HII (219 aa).

Residues 30 to 219 (RVIAGIDEAG…VREHVTCPSS (190 aa)) form the RNase H type-2 domain. The a divalent metal cation site is built by Asp-36, Glu-37, and Asp-128.

This sequence belongs to the RNase HII family. Requires Mn(2+) as cofactor. The cofactor is Mg(2+).

Its subcellular location is the cytoplasm. The catalysed reaction is Endonucleolytic cleavage to 5'-phosphomonoester.. In terms of biological role, endonuclease that specifically degrades the RNA of RNA-DNA hybrids. This Pelobacter propionicus (strain DSM 2379 / NBRC 103807 / OttBd1) protein is Ribonuclease HII.